The primary structure comprises 170 residues: 3-hydroxydecanoyl-[acyl-carrier-protein] dehydratase (170 aa).

His69 is a catalytic residue.

The protein belongs to the thioester dehydratase family. FabA subfamily. As to quaternary structure, homodimer.

It localises to the cytoplasm. The catalysed reaction is a (3R)-hydroxyacyl-[ACP] = a (2E)-enoyl-[ACP] + H2O. It carries out the reaction (3R)-hydroxydecanoyl-[ACP] = (2E)-decenoyl-[ACP] + H2O. The enzyme catalyses (2E)-decenoyl-[ACP] = (3Z)-decenoyl-[ACP]. It participates in lipid metabolism; fatty acid biosynthesis. In terms of biological role, necessary for the introduction of cis unsaturation into fatty acids. Catalyzes the dehydration of (3R)-3-hydroxydecanoyl-ACP to E-(2)-decenoyl-ACP and then its isomerization to Z-(3)-decenoyl-ACP. Can catalyze the dehydratase reaction for beta-hydroxyacyl-ACPs with saturated chain lengths up to 16:0, being most active on intermediate chain length. The polypeptide is 3-hydroxydecanoyl-[acyl-carrier-protein] dehydratase (Idiomarina loihiensis (strain ATCC BAA-735 / DSM 15497 / L2-TR)).